The chain runs to 290 residues: Ribonuclease 3 (290 aa).

The RNase III domain occupies 20–145 (YSCFYRILGF…FIGAIYLDRG (126 aa)). Position 62 (glutamate 62) interacts with Mg(2+). Aspartate 66 is a catalytic residue. Residues asparagine 131 and glutamate 134 each coordinate Mg(2+). Glutamate 134 is an active-site residue. Residues 173-242 (NFKSKLIEWS…AQMTLKKIKG (70 aa)) form the DRBM domain. Residues 254–290 (KTQNNVPAEDTTPESETSLTAENQQIDEIISTEEISV) form a disordered region. Positions 267-279 (ESETSLTAENQQI) are enriched in polar residues.

The protein belongs to the ribonuclease III family. Homodimer. Mg(2+) is required as a cofactor.

Its subcellular location is the cytoplasm. The enzyme catalyses Endonucleolytic cleavage to 5'-phosphomonoester.. Functionally, digests double-stranded RNA. Involved in the processing of primary rRNA transcript to yield the immediate precursors to the large and small rRNAs (23S and 16S). Processes some mRNAs, and tRNAs when they are encoded in the rRNA operon. Processes pre-crRNA and tracrRNA of type II CRISPR loci if present in the organism. The sequence is that of Ribonuclease 3 from Bacteroides fragilis (strain ATCC 25285 / DSM 2151 / CCUG 4856 / JCM 11019 / LMG 10263 / NCTC 9343 / Onslow / VPI 2553 / EN-2).